The following is a 242-amino-acid chain: tRNA (guanine-N(1)-)-methyltransferase (242 aa).

S-adenosyl-L-methionine-binding positions include Gly-114 and 134 to 139; that span reads IGDFVL. Over residues 223 to 233 the composition is skewed to basic and acidic residues; that stretch reads RRDLLPEHSKN. The segment at 223-242 is disordered; it reads RRDLLPEHSKNNPEQTNKLS.

Belongs to the RNA methyltransferase TrmD family. As to quaternary structure, homodimer.

It is found in the cytoplasm. The enzyme catalyses guanosine(37) in tRNA + S-adenosyl-L-methionine = N(1)-methylguanosine(37) in tRNA + S-adenosyl-L-homocysteine + H(+). Its function is as follows. Specifically methylates guanosine-37 in various tRNAs. This Rhodopirellula baltica (strain DSM 10527 / NCIMB 13988 / SH1) protein is tRNA (guanine-N(1)-)-methyltransferase.